A 226-amino-acid polypeptide reads, in one-letter code: Charged multivesicular body protein 5 (226 aa).

Positions 21 to 93 form a coiled coil; that stretch reads IAGVDARATN…NQSFNMEQAN (73 aa). Positions 188–198 are enriched in basic and acidic residues; it reads KAPEAPSREPG. Residues 188 to 226 are disordered; that stretch reads KAPEAPSREPGADSIVPGKSTIETDEFGLPKIPTSLKTT. Ser-201 is modified (phosphoserine). Thr-226 is modified (phosphothreonine).

Belongs to the SNF7 family. In terms of assembly, probable peripherally associated component of the endosomal sorting required for transport complex III (ESCRT-III).

The protein resides in the endosome membrane. Probable peripherally associated component of the endosomal sorting required for transport complex III (ESCRT-III) which is involved in multivesicular bodies (MVBs) formation and sorting of endosomal cargo proteins into MVBs. MVBs contain intraluminal vesicles (ILVs) that are generated by invagination and scission from the limiting membrane of the endosome and are delivered to lysosomes enabling degradation of membrane proteins. Specifically down-regulates Notch signaling activity in the germarium, probably by facilitating Notch endocytosis. This Drosophila melanogaster (Fruit fly) protein is Charged multivesicular body protein 5.